The primary structure comprises 279 residues: Diaminopimelate epimerase (279 aa).

3 residues coordinate substrate: asparagine 12, glutamine 45, and asparagine 65. Cysteine 74 (proton donor) is an active-site residue. Residues 75–76, asparagine 162, asparagine 195, and 213–214 each bind substrate; these read GN and ER. Cysteine 222 serves as the catalytic Proton acceptor. Position 223 to 224 (223 to 224) interacts with substrate; sequence GT.

It belongs to the diaminopimelate epimerase family. In terms of assembly, homodimer.

The protein localises to the cytoplasm. It catalyses the reaction (2S,6S)-2,6-diaminopimelate = meso-2,6-diaminopimelate. It participates in amino-acid biosynthesis; L-lysine biosynthesis via DAP pathway; DL-2,6-diaminopimelate from LL-2,6-diaminopimelate: step 1/1. Functionally, catalyzes the stereoinversion of LL-2,6-diaminopimelate (L,L-DAP) to meso-diaminopimelate (meso-DAP), a precursor of L-lysine and an essential component of the bacterial peptidoglycan. This Shewanella woodyi (strain ATCC 51908 / MS32) protein is Diaminopimelate epimerase.